The primary structure comprises 623 residues: Chaperone protein HtpG (623 aa).

Residues 1-336 (MVSKQQTMGF…ASDLPLNISR (336 aa)) are a; substrate-binding. The segment at 337–550 (EILQDNKQVE…EQDMGLEMQR (214 aa)) is b. The tract at residues 551–623 (ILQAAGQQVP…NRVNRLLVSS (73 aa)) is c.

It belongs to the heat shock protein 90 family. As to quaternary structure, homodimer.

The protein resides in the cytoplasm. Molecular chaperone. Has ATPase activity. The sequence is that of Chaperone protein HtpG from Legionella pneumophila (strain Paris).